The chain runs to 247 residues: Type III pantothenate kinase (247 aa).

Aspartate 6–threonine 13 provides a ligand contact to ATP. Glycine 101–arginine 104 contributes to the substrate binding site. Aspartate 103 serves as the catalytic Proton acceptor. A K(+)-binding site is contributed by aspartate 123. An ATP-binding site is contributed by threonine 126. Threonine 177 contacts substrate.

This sequence belongs to the type III pantothenate kinase family. Homodimer. Requires NH4(+) as cofactor. The cofactor is K(+).

The protein resides in the cytoplasm. It carries out the reaction (R)-pantothenate + ATP = (R)-4'-phosphopantothenate + ADP + H(+). The protein operates within cofactor biosynthesis; coenzyme A biosynthesis; CoA from (R)-pantothenate: step 1/5. Its function is as follows. Catalyzes the phosphorylation of pantothenate (Pan), the first step in CoA biosynthesis. The sequence is that of Type III pantothenate kinase from Thermosipho melanesiensis (strain DSM 12029 / CIP 104789 / BI429).